The chain runs to 1219 residues: Myosin-5 (1219 aa).

A compositionally biased stretch (basic residues) spans 1–12 (MAILKRGARKKV). The tract at residues 1–20 (MAILKRGARKKVHQEPAKRS) is disordered. In terms of domain architecture, Myosin motor spans 36 to 715 (VGVSDLTLLS…TLFALEHMRD (680 aa)). ATP is bound at residue 129 to 136 (GESGAGKT). Ser357 carries the post-translational modification Phosphoserine. Tyr359 is subject to Phosphotyrosine. Positions 404–486 (SIGILDIYGF…PGIFAAMNDS (83 aa)) are actin-binding. 2 consecutive IQ domains span residues 719–739 (HNMAARIQRAWRRFLQRRIDA) and 740–765 (ATKIQRTIRERKEGNKYEKLRDYGTK). Residues 771–961 (KERRSMSLLG…TISVRRGNPP (191 aa)) form the TH1 domain. Ser777 is modified (phosphoserine). Over residues 951 to 964 (STISVRRGNPPNSQ) the composition is skewed to polar residues. Disordered stretches follow at residues 951–1106 (STIS…SELP) and 1139–1167 (TAYMKPHSGNNNIPTPPQNRDVPKPVLNS). Over residues 974–984 (SISSGYHASSS) the composition is skewed to low complexity. Ser992 is modified (phosphoserine). The span at 1030–1041 (NPASTLTASQSN) shows a compositional bias: polar residues. Residues 1048–1063 (TAATRATPAATPAAAA) show a composition bias toward low complexity. Residues 1072-1083 (IPPPPPPPPPSS) show a composition bias toward pro residues. One can recognise an SH3 domain in the interval 1085–1147 (PKEPMFEAAY…PTAYMKPHSG (63 aa)). At Ser1205 the chain carries Phosphoserine.

This sequence belongs to the TRAFAC class myosin-kinesin ATPase superfamily. Myosin family. In terms of assembly, interacts (via myosin motor domain) with SHE4; this interaction is important for proper localization and may regulate the interaction of the motor domain with actin. Interacts (via SH3 domain) with VRP1; this interaction is required for localization to sites of polarized growth and may regulate the interaction of the tail domain with actin. Interacts (via SH3 domain) with PAN1; this interaction is important for late stages of endocytopsis. Interacts (via SH3 domain) with BBC1 and LAS17. Interacts (via C-terminal acidic tail) with ARC19 and ARC40; ARC19 and ARC40 are Arp2/3 complex subunits. Interacts with BZZ1, PKH1, PKH2, YPK1 and YPK2. In terms of processing, phosphorylation of the TEDS site (Ser-357) is required for the polarization of the actin cytoskeleton and for ligand-induced, but not for constitutive internalization of STE2. Phosphorylation probably activates the myosin-I ATPase activity. Ser-357 is phosphorylated by YPK2 in vitro.

Its subcellular location is the cytoplasm. The protein resides in the cytoskeleton. The protein localises to the actin patch. One of two redundant type-I myosins implicated in the organization of the actin cytoskeleton. Required for proper actin cytoskeleton polarization and for the internalization step in endocytosis. At the cell cortex, assembles in patch-like structures together with proteins from the actin-polymerizing machinery and promotes actin assembly. Functions redundantly with LAS17 as actin nucleation-promoting factor (NPF) for the Arp2/3 complex. Motor domain phosphorylation by PAK kinases CLA4 and STE20 promotes CDC42-regulated actin assembly. Functions together with the NPF PAN1 in late stages of endocytosis. Motor domain phosphorylation by PDK1 kinases PKH1 and PKH2, and by SGK kinases YPK1 and YPK2, promotes ligand-induced, but not constitutive endocytosis of the G protein-coupled receptor STE2. This is Myosin-5 (MYO5) from Saccharomyces cerevisiae (strain YJM789) (Baker's yeast).